Here is a 743-residue protein sequence, read N- to C-terminus: Phosphoribosylformylglycinamidine synthase subunit PurL (743 aa).

H50 is a catalytic residue. Y53 and K92 together coordinate ATP. A Mg(2+)-binding site is contributed by E94. Residues 95-98 (SHNH) and R117 contribute to the substrate site. H96 (proton acceptor) is an active-site residue. Residue D118 participates in Mg(2+) binding. Substrate is bound at residue Q241. D269 is a Mg(2+) binding site. 313 to 315 (ESQ) contributes to the substrate binding site. The ATP site is built by D495 and G532. Residue N533 coordinates Mg(2+). Residue S535 coordinates substrate.

Belongs to the FGAMS family. In terms of assembly, monomer. Part of the FGAM synthase complex composed of 1 PurL, 1 PurQ and 2 PurS subunits.

Its subcellular location is the cytoplasm. The catalysed reaction is N(2)-formyl-N(1)-(5-phospho-beta-D-ribosyl)glycinamide + L-glutamine + ATP + H2O = 2-formamido-N(1)-(5-O-phospho-beta-D-ribosyl)acetamidine + L-glutamate + ADP + phosphate + H(+). Its pathway is purine metabolism; IMP biosynthesis via de novo pathway; 5-amino-1-(5-phospho-D-ribosyl)imidazole from N(2)-formyl-N(1)-(5-phospho-D-ribosyl)glycinamide: step 1/2. Functionally, part of the phosphoribosylformylglycinamidine synthase complex involved in the purines biosynthetic pathway. Catalyzes the ATP-dependent conversion of formylglycinamide ribonucleotide (FGAR) and glutamine to yield formylglycinamidine ribonucleotide (FGAM) and glutamate. The FGAM synthase complex is composed of three subunits. PurQ produces an ammonia molecule by converting glutamine to glutamate. PurL transfers the ammonia molecule to FGAR to form FGAM in an ATP-dependent manner. PurS interacts with PurQ and PurL and is thought to assist in the transfer of the ammonia molecule from PurQ to PurL. This is Phosphoribosylformylglycinamidine synthase subunit PurL from Rhizobium etli (strain CIAT 652).